A 364-amino-acid polypeptide reads, in one-letter code: Aminomethyltransferase (364 aa).

The protein belongs to the GcvT family. The glycine cleavage system is composed of four proteins: P, T, L and H.

It catalyses the reaction N(6)-[(R)-S(8)-aminomethyldihydrolipoyl]-L-lysyl-[protein] + (6S)-5,6,7,8-tetrahydrofolate = N(6)-[(R)-dihydrolipoyl]-L-lysyl-[protein] + (6R)-5,10-methylene-5,6,7,8-tetrahydrofolate + NH4(+). Its function is as follows. The glycine cleavage system catalyzes the degradation of glycine. The sequence is that of Aminomethyltransferase from Anoxybacillus flavithermus (strain DSM 21510 / WK1).